A 2116-amino-acid polypeptide reads, in one-letter code: Unconventional myosin-VIIb (2116 aa).

The Myosin motor domain occupies 65–760 (QGVDDMIRLG…QDTLLEVQRS (696 aa)). 158 to 165 (GESGAGKT) provides a ligand contact to ATP. The segment at 637–659 (LDQLMKILTNCQPYFIRCIKPNE) is actin-binding. IQ domains follow at residues 745–765 (IFLRDHQDTLLEVQRSQVLDR), 763–792 (LDRAALSIQKVLRGYRYRKEFLRQRRAAVT), 786–815 (QRRAAVTLQAWWRGYCNRRNFKLILVGFER), 814–834 (ERLQAIARSQPLARQYQAMRQ), 832–861 (MRQRTVQLQALCRGYLVRQQVQAKRRAVVV), and 855–884 (KRRAVVVIQAHARGMAARRNFQQRKANAPL). Ser904 is subject to Phosphoserine. The mediates interaction with ANKS4B stretch occupies residues 916 to 1542 (EKVFGFLPAM…KKQGLLASEN (627 aa)). The region spanning 989–1192 (HIRRPLRYPL…PTWLELQAVK (204 aa)) is the MyTH4 1 domain. In terms of domain architecture, FERM 1 spans 1197–1506 (IPIQVILATG…EGLKERSIFA (310 aa)). Phosphoserine is present on Ser1371. The region spanning 1501–1567 (ERSIFAMALQ…PMACLYTIPT (67 aa)) is the SH3 domain. The tract at residues 1501-2116 (ERSIFAMALQ…GSKAPALAST (616 aa)) is mediates interaction with CDHR2, CDHR5 and USH1C. MyTH4 domains follow at residues 1644–1793 (YSCE…EAAE) and 1790–1896 (EAAE…KLWL). Ser1645 bears the Phosphoserine mark. The region spanning 1799–2102 (ICHKIYFPND…SYVQQLLSAM (304 aa)) is the FERM 2 domain.

Belongs to the TRAFAC class myosin-kinesin ATPase superfamily. Myosin family. In terms of assembly, part of the IMAC/intermicrovillar adhesion complex/intermicrovillar tip-link complex composed of ANKS4B, MYO7B, USH1C, CDHR2 and CDHR5. Interacts with CDHR2. Interacts with CDHR5. Interacts with USH1C. Interacts with ANKS4B; requires initial interaction with USH1C. Interacts with CALML4; the interaction mediates the association of CALML4 with the IMAC/intermicrovillar adhesion complex.

It is found in the cytoplasm. The protein resides in the cytoskeleton. The protein localises to the cell projection. It localises to the microvillus. Its function is as follows. Myosins are actin-based motor molecules with ATPase activity. Their highly divergent tails are presumed to bind to membranous compartments, which would be moved relative to actin filaments. As part of the intermicrovillar adhesion complex/IMAC plays a role in epithelial brush border differentiation, controlling microvilli organization and length. May link the complex to the actin core bundle of microvilli. The sequence is that of Unconventional myosin-VIIb from Homo sapiens (Human).